Reading from the N-terminus, the 209-residue chain is GTP cyclohydrolase 1 (209 aa).

The Zn(2+) site is built by Cys-89, His-92, and Cys-163.

This sequence belongs to the GTP cyclohydrolase I family. As to quaternary structure, toroid-shaped homodecamer, composed of two pentamers of five dimers.

It catalyses the reaction GTP + H2O = 7,8-dihydroneopterin 3'-triphosphate + formate + H(+). It participates in cofactor biosynthesis; 7,8-dihydroneopterin triphosphate biosynthesis; 7,8-dihydroneopterin triphosphate from GTP: step 1/1. The chain is GTP cyclohydrolase 1 from Sulfolobus acidocaldarius (strain ATCC 33909 / DSM 639 / JCM 8929 / NBRC 15157 / NCIMB 11770).